We begin with the raw amino-acid sequence, 195 residues long: 7-methyl-GTP pyrophosphatase (195 aa).

D70 functions as the Proton acceptor in the catalytic mechanism.

Belongs to the Maf family. YceF subfamily. Requires a divalent metal cation as cofactor.

It localises to the cytoplasm. The catalysed reaction is N(7)-methyl-GTP + H2O = N(7)-methyl-GMP + diphosphate + H(+). Nucleoside triphosphate pyrophosphatase that hydrolyzes 7-methyl-GTP (m(7)GTP). May have a dual role in cell division arrest and in preventing the incorporation of modified nucleotides into cellular nucleic acids. The polypeptide is 7-methyl-GTP pyrophosphatase (Shewanella sp. (strain MR-4)).